Reading from the N-terminus, the 553-residue chain is Glycerol kinase 2 (553 aa).

Residue threonine 20 coordinates substrate. Arginine 24 provides a ligand contact to ATP. Substrate contacts are provided by arginine 94, tyrosine 148, and aspartate 259. Residues threonine 281, glycine 326, and 427 to 431 (GMTNN) contribute to the ATP site. The chain crosses the membrane as a helical span at residues 526–546 (IFSSMPLGFFIVSSMVMLIGA).

It belongs to the FGGY kinase family. In terms of assembly, interacts with ARMC12 and PLD6.

Its subcellular location is the mitochondrion outer membrane. The protein localises to the cytoplasm. It catalyses the reaction glycerol + ATP = sn-glycerol 3-phosphate + ADP + H(+). Its pathway is polyol metabolism; glycerol degradation via glycerol kinase pathway; sn-glycerol 3-phosphate from glycerol: step 1/1. Key enzyme in the regulation of glycerol uptake and metabolism. Essential for male fertility and sperm mitochondrial sheath formation. Required for proper arrangement of crescent-like mitochondria to form the mitochondrial sheath during spermatogenesis. Can induce mitochondrial clustering through interactions with PLD6 and up-regulation of phosphatidic acid synthesis in the mitochondria. This is Glycerol kinase 2 (GK2) from Macaca fascicularis (Crab-eating macaque).